Reading from the N-terminus, the 557-residue chain is Aspartate--tRNA ligase, cytoplasmic (557 aa).

Residues 1-12 (MSQDENIVKAVE) are compositionally biased toward basic and acidic residues. The interval 1–74 (MSQDENIVKA…AAAEDTAKDN (74 aa)) is disordered. Position 2 is an N-acetylserine (S2). A Phosphoserine modification is found at S14. Positions 37–74 (LQKEQEKQRKKEERALQLEAEREAREKKAAAEDTAKDN) are enriched in basic and acidic residues. An L-aspartate-binding site is contributed by E281. A Phosphoserine modification is found at S301. Residues 303-306 (QFNK) are aspartate. R325 is an L-aspartate binding site. ATP-binding positions include 325–327 (RAE), 333–335 (RHM), and E478. 2 residues coordinate L-aspartate: S481 and R485. Residue S502 is modified to Phosphoserine. 528–531 (GLER) serves as a coordination point for ATP. Phosphoserine is present on S546.

The protein belongs to the class-II aminoacyl-tRNA synthetase family. Type 2 subfamily. As to quaternary structure, homodimer.

The protein resides in the cytoplasm. The enzyme catalyses tRNA(Asp) + L-aspartate + ATP = L-aspartyl-tRNA(Asp) + AMP + diphosphate. This Saccharomyces cerevisiae (strain ATCC 204508 / S288c) (Baker's yeast) protein is Aspartate--tRNA ligase, cytoplasmic (DPS1).